Consider the following 534-residue polypeptide: Glucan endo-1,3-beta-glucosidase 12 (534 aa).

An N-terminal signal peptide occupies residues 1-24 (MGQRLNLVFWIFVSILAFLNFGMA). The active-site Proton donor is Glu-120. An N-linked (GlcNAc...) asparagine glycan is attached at Asn-127. Glu-264 acts as the Nucleophile in catalysis. Residues Asn-336, Asn-357, and Asn-375 are each glycosylated (N-linked (GlcNAc...) asparagine). The disordered stretch occupies residues 348–379 (ENTTPVSPTNSTTGTSPSPSSSPIINGNSTVT). A compositionally biased stretch (low complexity) spans 349-377 (NTTPVSPTNSTTGTSPSPSSSPIINGNST). An intrachain disulfide couples Cys-392 to Cys-455. N-linked (GlcNAc...) asparagine glycans are attached at residues Asn-485, Asn-491, and Asn-495. A lipid anchor (GPI-anchor amidated serine) is attached at Ser-507. Positions 508 to 534 (STNEAFRQMVVAVSVLLPCFVVCSSIW) are cleaved as a propeptide — removed in mature form.

This sequence belongs to the glycosyl hydrolase 17 family. Post-translationally, contains two additional disulfide bonds.

It localises to the secreted. The protein resides in the cell wall. The protein localises to the cell membrane. It catalyses the reaction Hydrolysis of (1-&gt;3)-beta-D-glucosidic linkages in (1-&gt;3)-beta-D-glucans.. This chain is Glucan endo-1,3-beta-glucosidase 12, found in Arabidopsis thaliana (Mouse-ear cress).